The sequence spans 492 residues: 3-octaprenyl-4-hydroxybenzoate carboxy-lyase (492 aa).

N175 contacts Mn(2+). Prenylated FMN contacts are provided by residues 178 to 180 (IYR), 192 to 194 (RWL), and 197 to 198 (RG). E241 contacts Mn(2+). D290 acts as the Proton donor in catalysis.

It belongs to the UbiD family. In terms of assembly, homohexamer. It depends on prenylated FMN as a cofactor. Mn(2+) serves as cofactor.

It localises to the cell membrane. It catalyses the reaction a 4-hydroxy-3-(all-trans-polyprenyl)benzoate + H(+) = a 2-(all-trans-polyprenyl)phenol + CO2. It participates in cofactor biosynthesis; ubiquinone biosynthesis. Functionally, catalyzes the decarboxylation of 3-octaprenyl-4-hydroxy benzoate to 2-octaprenylphenol, an intermediate step in ubiquinone biosynthesis. This is 3-octaprenyl-4-hydroxybenzoate carboxy-lyase from Salmonella choleraesuis (strain SC-B67).